The chain runs to 175 residues: Beta-carotene hydroxylase (175 aa).

The 126-residue stretch at 11–136 (FVTVIGMEVI…RGKEGCVSFG (126 aa)) folds into the Fatty acid hydroxylase domain.

This sequence belongs to the sterol desaturase family.

The enzyme catalyses all-trans-beta-carotene + 4 reduced [2Fe-2S]-[ferredoxin] + 2 O2 + 4 H(+) = all-trans-zeaxanthin + 4 oxidized [2Fe-2S]-[ferredoxin] + 2 H2O. It functions in the pathway carotenoid biosynthesis; zeaxanthin biosynthesis. Functionally, catalyzes the hydroxylation reaction from beta-carotene to zeaxanthin. In Pantoea ananas (Erwinia uredovora), this protein is Beta-carotene hydroxylase (crtZ).